The chain runs to 333 residues: Ketol-acid reductoisomerase (NADP(+)) (333 aa).

Positions M1–T181 constitute a KARI N-terminal Rossmann domain. Residues Y24–Q27, R47, and D82–Q85 contribute to the NADP(+) site. H107 is an active-site residue. G133 contributes to the NADP(+) binding site. In terms of domain architecture, KARI C-terminal knotted spans T182–L327. Positions 190, 194, 226, and 230 each coordinate Mg(2+). S251 lines the substrate pocket.

This sequence belongs to the ketol-acid reductoisomerase family. It depends on Mg(2+) as a cofactor.

It carries out the reaction (2R)-2,3-dihydroxy-3-methylbutanoate + NADP(+) = (2S)-2-acetolactate + NADPH + H(+). The enzyme catalyses (2R,3R)-2,3-dihydroxy-3-methylpentanoate + NADP(+) = (S)-2-ethyl-2-hydroxy-3-oxobutanoate + NADPH + H(+). Its pathway is amino-acid biosynthesis; L-isoleucine biosynthesis; L-isoleucine from 2-oxobutanoate: step 2/4. It participates in amino-acid biosynthesis; L-valine biosynthesis; L-valine from pyruvate: step 2/4. Functionally, involved in the biosynthesis of branched-chain amino acids (BCAA). Catalyzes an alkyl-migration followed by a ketol-acid reduction of (S)-2-acetolactate (S2AL) to yield (R)-2,3-dihydroxy-isovalerate. In the isomerase reaction, S2AL is rearranged via a Mg-dependent methyl migration to produce 3-hydroxy-3-methyl-2-ketobutyrate (HMKB). In the reductase reaction, this 2-ketoacid undergoes a metal-dependent reduction by NADPH to yield (R)-2,3-dihydroxy-isovalerate. The polypeptide is Ketol-acid reductoisomerase (NADP(+)) (Desulfovibrio desulfuricans (strain ATCC 27774 / DSM 6949 / MB)).